We begin with the raw amino-acid sequence, 284 residues long: Bifunctional protein FolD (284 aa).

NADP(+) is bound at residue Gly166 to Ser168.

It belongs to the tetrahydrofolate dehydrogenase/cyclohydrolase family. In terms of assembly, homodimer.

The enzyme catalyses (6R)-5,10-methylene-5,6,7,8-tetrahydrofolate + NADP(+) = (6R)-5,10-methenyltetrahydrofolate + NADPH. It carries out the reaction (6R)-5,10-methenyltetrahydrofolate + H2O = (6R)-10-formyltetrahydrofolate + H(+). Its pathway is one-carbon metabolism; tetrahydrofolate interconversion. In terms of biological role, catalyzes the oxidation of 5,10-methylenetetrahydrofolate to 5,10-methenyltetrahydrofolate and then the hydrolysis of 5,10-methenyltetrahydrofolate to 10-formyltetrahydrofolate. This Legionella pneumophila (strain Paris) protein is Bifunctional protein FolD.